The sequence spans 121 residues: Ribonuclease P protein component (121 aa).

Belongs to the RnpA family. As to quaternary structure, consists of a catalytic RNA component (M1 or rnpB) and a protein subunit.

It catalyses the reaction Endonucleolytic cleavage of RNA, removing 5'-extranucleotides from tRNA precursor.. RNaseP catalyzes the removal of the 5'-leader sequence from pre-tRNA to produce the mature 5'-terminus. It can also cleave other RNA substrates such as 4.5S RNA. The protein component plays an auxiliary but essential role in vivo by binding to the 5'-leader sequence and broadening the substrate specificity of the ribozyme. This is Ribonuclease P protein component from Geobacillus kaustophilus (strain HTA426).